The chain runs to 391 residues: Stearoyl-[acyl-carrier-protein] 9-desaturase 5, chloroplastic (391 aa).

Residues 1–20 (MAFAPSHTASPSYCGVAQGG) form a disordered region. The N-terminal 32 residues, 1-32 (MAFAPSHTASPSYCGVAQGGRRSNGMSPVVAM), are a transit peptide targeting the chloroplast. Fe cation contacts are provided by glutamate 133, glutamate 171, histidine 174, glutamate 224, glutamate 257, and histidine 260.

This sequence belongs to the fatty acid desaturase type 2 family. As to quaternary structure, homodimer. Requires Fe(2+) as cofactor.

Its subcellular location is the plastid. The protein resides in the chloroplast. It catalyses the reaction octadecanoyl-[ACP] + 2 reduced [2Fe-2S]-[ferredoxin] + O2 + 2 H(+) = (9Z)-octadecenoyl-[ACP] + 2 oxidized [2Fe-2S]-[ferredoxin] + 2 H2O. The protein operates within lipid metabolism; fatty acid metabolism. In terms of biological role, converts stearoyl-ACP to oleoyl-ACP by introduction of a cis double bond between carbons 9 and 10 of the acyl chain. The chain is Stearoyl-[acyl-carrier-protein] 9-desaturase 5, chloroplastic from Oryza sativa subsp. indica (Rice).